Consider the following 257-residue polypeptide: Adenylate kinase (257 aa).

52–57 lines the ATP pocket; sequence GAGKGT. The segment at 72-101 is NMP; the sequence is ATGDMLRSQVAKKTELGKEAKKIMDQGGLV. Residues threonine 73, arginine 78, 99-101, 128-131, and glutamine 135 contribute to the AMP site; these read GLV and GFPR. The tract at residues 169 to 206 is LID; the sequence is GRLVHPASGRSYHKIFNPPKNDMKDDVTGEPLIQRSDD. ATP-binding positions include arginine 170 and 179–180; that span reads SY. Residues arginine 203 and arginine 214 each contribute to the AMP site. Glutamine 242 is a binding site for ATP.

Belongs to the adenylate kinase family. AK2 subfamily. In terms of assembly, monomer.

It is found in the cytoplasm. Its subcellular location is the cytosol. The protein localises to the mitochondrion intermembrane space. It carries out the reaction AMP + ATP = 2 ADP. In terms of biological role, catalyzes the reversible transfer of the terminal phosphate group between ATP and AMP. Plays an important role in cellular energy homeostasis and in adenine nucleotide metabolism. Adenylate kinase activity is critical for regulation of the phosphate utilization and the AMP de novo biosynthesis pathways. The chain is Adenylate kinase (adk1) from Neosartorya fischeri (strain ATCC 1020 / DSM 3700 / CBS 544.65 / FGSC A1164 / JCM 1740 / NRRL 181 / WB 181) (Aspergillus fischerianus).